The primary structure comprises 547 residues: Chaperonin GroEL (547 aa).

ATP-binding positions include 30 to 33 (TLGP), Lys51, 87 to 91 (DGTTT), Gly415, and Asp496. The interval 528-547 (KEEPMPMRGSGMGGMGGMDF) is disordered. The span at 537 to 547 (SGMGGMGGMDF) shows a compositional bias: gly residues.

Belongs to the chaperonin (HSP60) family. In terms of assembly, forms a cylinder of 14 subunits composed of two heptameric rings stacked back-to-back. Interacts with the co-chaperonin GroES.

It is found in the cytoplasm. It carries out the reaction ATP + H2O + a folded polypeptide = ADP + phosphate + an unfolded polypeptide.. Its function is as follows. Together with its co-chaperonin GroES, plays an essential role in assisting protein folding. The GroEL-GroES system forms a nano-cage that allows encapsulation of the non-native substrate proteins and provides a physical environment optimized to promote and accelerate protein folding. The protein is Chaperonin GroEL of Rickettsia canadensis (strain McKiel).